Consider the following 124-residue polypeptide: Small ribosomal subunit protein uS13 (124 aa).

Residues 94 to 124 form a disordered region; sequence GLPLRGQRTKNNSRTRKGRRKTVANKKKATK. A compositionally biased stretch (basic residues) spans 100-124; the sequence is QRTKNNSRTRKGRRKTVANKKKATK.

It belongs to the universal ribosomal protein uS13 family. As to quaternary structure, part of the 30S ribosomal subunit. Forms a loose heterodimer with protein S19. Forms two bridges to the 50S subunit in the 70S ribosome.

Its function is as follows. Located at the top of the head of the 30S subunit, it contacts several helices of the 16S rRNA. In the 70S ribosome it contacts the 23S rRNA (bridge B1a) and protein L5 of the 50S subunit (bridge B1b), connecting the 2 subunits; these bridges are implicated in subunit movement. Contacts the tRNAs in the A and P-sites. This is Small ribosomal subunit protein uS13 from Christiangramia forsetii (strain DSM 17595 / CGMCC 1.15422 / KT0803) (Gramella forsetii).